A 155-amino-acid chain; its full sequence is Small ribosomal subunit protein uS7cz/uS7cy (155 aa).

This sequence belongs to the universal ribosomal protein uS7 family. In terms of assembly, part of the 30S ribosomal subunit.

The protein localises to the plastid. The protein resides in the chloroplast. In terms of biological role, one of the primary rRNA binding proteins, it binds directly to 16S rRNA where it nucleates assembly of the head domain of the 30S subunit. The chain is Small ribosomal subunit protein uS7cz/uS7cy (rps7-A) from Drimys granadensis.